The following is a 792-amino-acid chain: 5-methyltetrahydropteroyltriglutamate--homocysteine methyltransferase (792 aa).

5-methyltetrahydropteroyltri-L-glutamate-binding positions include 16 to 19 (RELK) and K112. Residues 432-434 (IGS) and E485 contribute to the L-homocysteine site. L-methionine is bound by residues 432–434 (IGS) and E485. 5-methyltetrahydropteroyltri-L-glutamate is bound by residues 516 to 517 (RC) and W562. Residue D600 coordinates L-homocysteine. D600 provides a ligand contact to L-methionine. 5-methyltetrahydropteroyltri-L-glutamate is bound at residue E606. Zn(2+)-binding residues include H642, C644, and E666. Residue H695 is the Proton donor of the active site. C727 is a Zn(2+) binding site.

It belongs to the vitamin-B12 independent methionine synthase family. Zn(2+) serves as cofactor.

It catalyses the reaction 5-methyltetrahydropteroyltri-L-glutamate + L-homocysteine = tetrahydropteroyltri-L-glutamate + L-methionine. It functions in the pathway amino-acid biosynthesis; L-methionine biosynthesis via de novo pathway; L-methionine from L-homocysteine (MetE route): step 1/1. Functionally, catalyzes the transfer of a methyl group from 5-methyltetrahydrofolate to homocysteine resulting in methionine formation. The polypeptide is 5-methyltetrahydropteroyltriglutamate--homocysteine methyltransferase (Cupriavidus necator (strain ATCC 17699 / DSM 428 / KCTC 22496 / NCIMB 10442 / H16 / Stanier 337) (Ralstonia eutropha)).